A 427-amino-acid polypeptide reads, in one-letter code: V-type proton ATPase subunit C 2 (427 aa).

The disordered stretch occupies residues 292–319 (HKVKVTPLGNPDRPAAGQTDRERESEGE).

Belongs to the V-ATPase C subunit family. As to quaternary structure, V-ATPase is a heteromultimeric enzyme made up of two complexes: the ATP-hydrolytic V1 complex and the proton translocation V0 complex. The V1 complex consists of three catalytic AB heterodimers that form a heterohexamer, three peripheral stalks each consisting of EG heterodimers, one central rotor including subunits D and F, and the regulatory subunits C and H. The proton translocation complex V0 consists of the proton transport subunit a, a ring of proteolipid subunits c9c'', rotary subunit d, subunits e and f, and the accessory subunits ATP6AP1/Ac45 and ATP6AP2/PRR. As to expression, kidney and placenta.

Its function is as follows. Subunit of the V1 complex of vacuolar(H+)-ATPase (V-ATPase), a multisubunit enzyme composed of a peripheral complex (V1) that hydrolyzes ATP and a membrane integral complex (V0) that translocates protons. V-ATPase is responsible for acidifying and maintaining the pH of intracellular compartments and in some cell types, is targeted to the plasma membrane, where it is responsible for acidifying the extracellular environment. Subunit C is necessary for the assembly of the catalytic sector of the enzyme and is likely to have a specific function in its catalytic activity. The chain is V-type proton ATPase subunit C 2 (ATP6V1C2) from Homo sapiens (Human).